A 290-amino-acid chain; its full sequence is Arylamine N-acetyltransferase 2 (290 aa).

Cys68 acts as the Acyl-thioester intermediate in catalysis. CoA contacts are provided by Ser103 and Gly104. Substrate is bound at residue 106-107; it reads IH. Catalysis depends on residues His107 and Asp122. Tyr208 serves as a coordination point for CoA.

The protein belongs to the arylamine N-acetyltransferase family.

It localises to the cytoplasm. It catalyses the reaction an arylamine + acetyl-CoA = an N-acetylarylamine + CoA. The enzyme catalyses an N-hydroxyarylamine + acetyl-CoA = an N-acetoxyarylamine + CoA. Its function is as follows. Catalyzes the N- or O-acetylation of various arylamine and heterocyclic amine substrates. Participates in the detoxification of a plethora of hydrazine and arylamine drugs. This chain is Arylamine N-acetyltransferase 2 (Nat2), found in Rattus norvegicus (Rat).